A 102-amino-acid chain; its full sequence is Large ribosomal subunit protein bL21 (102 aa).

The protein belongs to the bacterial ribosomal protein bL21 family. In terms of assembly, part of the 50S ribosomal subunit. Contacts protein L20.

Functionally, this protein binds to 23S rRNA in the presence of protein L20. In Limosilactobacillus fermentum (strain NBRC 3956 / LMG 18251) (Lactobacillus fermentum), this protein is Large ribosomal subunit protein bL21.